The following is a 474-amino-acid chain: Pyruvate kinase (474 aa).

Substrate is bound at residue Arg32. K(+) contacts are provided by Asn34, Ser36, and Asp66. 34–37 contributes to the ATP binding site; the sequence is NFSH. Residues Arg73 and Lys155 each coordinate ATP. Mg(2+) is bound at residue Glu221. Gly244, Asp245, and Thr277 together coordinate substrate. Residue Asp245 participates in Mg(2+) binding.

The protein belongs to the pyruvate kinase family. As to quaternary structure, homotetramer. The cofactor is Mg(2+). Requires K(+) as cofactor.

The enzyme catalyses pyruvate + ATP = phosphoenolpyruvate + ADP + H(+). The protein operates within carbohydrate degradation; glycolysis; pyruvate from D-glyceraldehyde 3-phosphate: step 5/5. The sequence is that of Pyruvate kinase (pykF) from Clostridium perfringens (strain 13 / Type A).